The sequence spans 295 residues: Acetylglutamate kinase (295 aa).

Substrate is bound by residues 70 to 71 (GG), arginine 92, and asparagine 191.

It belongs to the acetylglutamate kinase family. ArgB subfamily.

It is found in the cytoplasm. The catalysed reaction is N-acetyl-L-glutamate + ATP = N-acetyl-L-glutamyl 5-phosphate + ADP. It functions in the pathway amino-acid biosynthesis; L-arginine biosynthesis; N(2)-acetyl-L-ornithine from L-glutamate: step 2/4. In terms of biological role, catalyzes the ATP-dependent phosphorylation of N-acetyl-L-glutamate. In Mycobacterium avium (strain 104), this protein is Acetylglutamate kinase.